The primary structure comprises 529 residues: Probable serine/threonine protein phosphatase 2A regulatory subunit B''epsilon (529 aa).

Residues 60–110 (KSGTPTNKSKNLPSVFLSSSTPPLSPRSSSGSPRFSRQRTSPPSLHSPLRS) are disordered. The segment covering 71 to 109 (LPSVFLSSSTPPLSPRSSSGSPRFSRQRTSPPSLHSPLR) has biased composition (low complexity). Residues 381 to 416 (SSEPSLEYWFKCVDLDGNGVITSNEMQFFFEEQLHR) enclose the EF-hand domain. Positions 394, 396, 398, and 405 each coordinate Ca(2+). Residues 507–529 (EEDVDEVSNGSADVWDEPLEPPF) are disordered. A compositionally biased stretch (acidic residues) spans 520-529 (VWDEPLEPPF).

PP2A consists of a common heterodimeric core enzyme, composed of a 36 kDa catalytic subunit (subunit C) and a 65 kDa constant regulatory subunit (PR65 or subunit A), that associates with a variety of regulatory subunits. Proteins that associate with the core dimer include three families of regulatory subunits B (the R2/B/PR55/B55, R3/B''/PR72/PR130/PR59 and R5/B'/B56 families) and cell signaling molecules.

Its function is as follows. Probable regulatory subunit of type 2A protein phosphatase. In Arabidopsis thaliana (Mouse-ear cress), this protein is Probable serine/threonine protein phosphatase 2A regulatory subunit B''epsilon (B''EPSILON).